Reading from the N-terminus, the 427-residue chain is Serine--tRNA ligase (427 aa).

231–233 (TAE) contacts L-serine. An ATP-binding site is contributed by 262–264 (RSE). Position 285 (glutamate 285) interacts with L-serine. 349-352 (EISS) is a binding site for ATP. Serine 385 contributes to the L-serine binding site.

It belongs to the class-II aminoacyl-tRNA synthetase family. Type-1 seryl-tRNA synthetase subfamily. As to quaternary structure, homodimer. The tRNA molecule binds across the dimer.

It is found in the cytoplasm. It carries out the reaction tRNA(Ser) + L-serine + ATP = L-seryl-tRNA(Ser) + AMP + diphosphate + H(+). It catalyses the reaction tRNA(Sec) + L-serine + ATP = L-seryl-tRNA(Sec) + AMP + diphosphate + H(+). The protein operates within aminoacyl-tRNA biosynthesis; selenocysteinyl-tRNA(Sec) biosynthesis; L-seryl-tRNA(Sec) from L-serine and tRNA(Sec): step 1/1. Catalyzes the attachment of serine to tRNA(Ser). Is also able to aminoacylate tRNA(Sec) with serine, to form the misacylated tRNA L-seryl-tRNA(Sec), which will be further converted into selenocysteinyl-tRNA(Sec). The sequence is that of Serine--tRNA ligase from Allorhizobium ampelinum (strain ATCC BAA-846 / DSM 112012 / S4) (Agrobacterium vitis (strain S4)).